We begin with the raw amino-acid sequence, 111 residues long: Probable 4-amino-4-deoxy-L-arabinose-phosphoundecaprenol flippase subunit ArnE (111 aa).

The Cytoplasmic segment spans residues 1-37 (MIWLTLVFASLLSVAGQLCQKQATCFVAINKRRKHIA). A helical transmembrane segment spans residues 38–58 (LWLGLALACLGLAMVLWLLVL). The region spanning 40–109 (LGLALACLGL…IIGGIVILGS (70 aa)) is the EamA domain. The Periplasmic portion of the chain corresponds to 59 to 60 (QN). Residues 61-81 (VPVGIAYPMLSLNFVWVTLAA) form a helical membrane-spanning segment. Topologically, residues 82–87 (VKLWHE) are cytoplasmic. Residues 88-108 (PVSPRHWCGVAFIIGGIVILG) traverse the membrane as a helical segment. Residues 109–111 (STV) are Periplasmic-facing.

Belongs to the ArnE family. Heterodimer of ArnE and ArnF.

The protein resides in the cell inner membrane. Its pathway is bacterial outer membrane biogenesis; lipopolysaccharide biosynthesis. Its function is as follows. Translocates 4-amino-4-deoxy-L-arabinose-phosphoundecaprenol (alpha-L-Ara4N-phosphoundecaprenol) from the cytoplasmic to the periplasmic side of the inner membrane. The chain is Probable 4-amino-4-deoxy-L-arabinose-phosphoundecaprenol flippase subunit ArnE from Escherichia coli (strain 55989 / EAEC).